The sequence spans 116 residues: Large ribosomal subunit protein bL17 (116 aa).

This sequence belongs to the bacterial ribosomal protein bL17 family. Part of the 50S ribosomal subunit. Contacts protein L32.

In Synechococcus sp. (strain JA-2-3B'a(2-13)) (Cyanobacteria bacterium Yellowstone B-Prime), this protein is Large ribosomal subunit protein bL17.